Reading from the N-terminus, the 141-residue chain is MPVQVDDIIKLLCHVSDHQKMKATIKHSARGALVAAAGAFLGGLVGGPPGIAVGGAVGGAMGAWMTSGQFKPIPQIIMELPPVQQQRLCDDIYTIVRTLDWTDATQLIMLVMGNDSLKQKVVAALINYMTKELQAEIQYGD.

Residues 33–53 (LVAAAGAFLGGLVGGPPGIAV) form a helical membrane-spanning segment.

The protein belongs to the C19orf12 family.

It is found in the mitochondrion. The protein localises to the mitochondrion membrane. It localises to the endoplasmic reticulum. Its subcellular location is the cytoplasm. The protein resides in the cytosol. This is Protein C19orf12 homolog from Xenopus tropicalis (Western clawed frog).